A 400-amino-acid polypeptide reads, in one-letter code: Protein screw (400 aa).

Residues 1 to 16 (MLNVFFLTSLFYAASA) form the signal peptide. Positions 17-277 (TTYVTTNNHI…RFKRDLEKRR (261 aa)) are excised as a propeptide. N-linked (GlcNAc...) asparagine glycans are attached at residues asparagine 165, asparagine 189, asparagine 201, asparagine 304, and asparagine 342. 3 disulfides stabilise this stretch: cysteine 300/cysteine 365, cysteine 329/cysteine 397, and cysteine 333/cysteine 399.

This sequence belongs to the TGF-beta family. In terms of assembly, heterodimers of scw/dpp are the active subunit, dpp/dpp homodimers elicit a basal response and scw/scw homodimers alone are ineffective in specifying a dorsal pattern. As to expression, ubiquitously expressed during early stages of embryogenesis, but the effect on development appears graded and is restricted to the dorsal side of the embryo.

It is found in the secreted. In terms of biological role, part of the signal that specifies dorsal cell fates in the embryo. Acts together with dpp. The chain is Protein screw (scw) from Drosophila melanogaster (Fruit fly).